We begin with the raw amino-acid sequence, 116 residues long: UPF0127 protein PF1050 (116 aa).

It belongs to the UPF0127 family.

This chain is UPF0127 protein PF1050, found in Pyrococcus furiosus (strain ATCC 43587 / DSM 3638 / JCM 8422 / Vc1).